Reading from the N-terminus, the 503-residue chain is Na(+)-translocating NADH-quinone reductase subunit B (503 aa).

Transmembrane regions (helical) follow at residues 55 to 75, 120 to 142, 161 to 181, and 186 to 206; these read MILVVVALFPATFSAIWNSGV, IFLPLLIISYSVGGACEVLFAVI, TLPPTIPYWMAALGIAFGVVV, and FGGTGMNILNPALSGRAFLFF. Thr248 is subject to FMN phosphoryl threonine. The next 5 membrane-spanning stretches (helical) occupy residues 361–381, 387–407, 417–437, 452–472, and 475–495; these read TSTFACLLGAIFLIVTGIASW, FGIGAFVTAWLFKIVSILIVG, FFIPAYRQLFLGGLAFGLVFM, WIYGLFIGFMTILIRLINPAY, and GVMLAILLGNVFAPLLDYFAV.

The protein belongs to the NqrB/RnfD family. In terms of assembly, composed of six subunits; NqrA, NqrB, NqrC, NqrD, NqrE and NqrF. FMN serves as cofactor.

Its subcellular location is the cell inner membrane. It carries out the reaction a ubiquinone + n Na(+)(in) + NADH + H(+) = a ubiquinol + n Na(+)(out) + NAD(+). NQR complex catalyzes the reduction of ubiquinone-1 to ubiquinol by two successive reactions, coupled with the transport of Na(+) ions from the cytoplasm to the periplasm. NqrA to NqrE are probably involved in the second step, the conversion of ubisemiquinone to ubiquinol. This Chlamydia felis (strain Fe/C-56) (Chlamydophila felis) protein is Na(+)-translocating NADH-quinone reductase subunit B.